Consider the following 101-residue polypeptide: Small ribosomal subunit protein uS14 (101 aa).

Belongs to the universal ribosomal protein uS14 family. In terms of assembly, part of the 30S ribosomal subunit. Contacts proteins S3 and S10.

Functionally, binds 16S rRNA, required for the assembly of 30S particles and may also be responsible for determining the conformation of the 16S rRNA at the A site. The polypeptide is Small ribosomal subunit protein uS14 (Nitrosospira multiformis (strain ATCC 25196 / NCIMB 11849 / C 71)).